Here is a 113-residue protein sequence, read N- to C-terminus: MPRPPKCRWVRSEPNVTHFKPVGVPMSMLDEVILTVEELEAIRLKDLEGLEQEECADMMKVSRPTFFRIINSARQKVADALVNGKAIRVEGGNYRVYEEEQRGHRGMRHRHGH.

Belongs to the UPF0251 family.

The polypeptide is UPF0251 protein Teth514_1147 (Thermoanaerobacter sp. (strain X514)).